The following is a 341-amino-acid chain: Golgi-associated RAB2 interactor protein 1B (341 aa).

The protein belongs to the GARIN family. In terms of tissue distribution, expressed in testis (at protein level).

The protein localises to the golgi apparatus. In terms of biological role, RAB2B effector protein required for accurate acrosome formation and normal male fertility. In complex with RAB2A/RAB2B, seems to suppress excessive vesicle trafficking during acrosome formation. The polypeptide is Golgi-associated RAB2 interactor protein 1B (Mus musculus (Mouse)).